The sequence spans 338 residues: tRNA N6-adenosine threonylcarbamoyltransferase (338 aa).

2 residues coordinate Fe cation: histidine 110 and histidine 114. Residues 132–136 (VLSGG), aspartate 165, glycine 178, and asparagine 274 contribute to the substrate site. Aspartate 298 provides a ligand contact to Fe cation.

Belongs to the KAE1 / TsaD family. The cofactor is Fe(2+).

The protein localises to the cytoplasm. It catalyses the reaction L-threonylcarbamoyladenylate + adenosine(37) in tRNA = N(6)-L-threonylcarbamoyladenosine(37) in tRNA + AMP + H(+). Its function is as follows. Required for the formation of a threonylcarbamoyl group on adenosine at position 37 (t(6)A37) in tRNAs that read codons beginning with adenine. Is involved in the transfer of the threonylcarbamoyl moiety of threonylcarbamoyl-AMP (TC-AMP) to the N6 group of A37, together with TsaE and TsaB. TsaD likely plays a direct catalytic role in this reaction. In Borrelia duttonii (strain Ly), this protein is tRNA N6-adenosine threonylcarbamoyltransferase.